A 310-amino-acid polypeptide reads, in one-letter code: Ribose-phosphate pyrophosphokinase (310 aa).

ATP contacts are provided by residues 33-35 (DGE) and 92-93 (RQ). Residues His127 and Asp166 each coordinate Mg(2+). Lys189 is a catalytic residue. D-ribose 5-phosphate-binding positions include Arg191, Asp215, and 219-223 (DTAGT).

The protein belongs to the ribose-phosphate pyrophosphokinase family. Class I subfamily. In terms of assembly, homohexamer. The cofactor is Mg(2+).

It is found in the cytoplasm. The enzyme catalyses D-ribose 5-phosphate + ATP = 5-phospho-alpha-D-ribose 1-diphosphate + AMP + H(+). The protein operates within metabolic intermediate biosynthesis; 5-phospho-alpha-D-ribose 1-diphosphate biosynthesis; 5-phospho-alpha-D-ribose 1-diphosphate from D-ribose 5-phosphate (route I): step 1/1. Involved in the biosynthesis of the central metabolite phospho-alpha-D-ribosyl-1-pyrophosphate (PRPP) via the transfer of pyrophosphoryl group from ATP to 1-hydroxyl of ribose-5-phosphate (Rib-5-P). This is Ribose-phosphate pyrophosphokinase from Bordetella pertussis (strain Tohama I / ATCC BAA-589 / NCTC 13251).